The primary structure comprises 170 residues: Adenine phosphoribosyltransferase (170 aa).

It belongs to the purine/pyrimidine phosphoribosyltransferase family. Homodimer.

The protein resides in the cytoplasm. It carries out the reaction AMP + diphosphate = 5-phospho-alpha-D-ribose 1-diphosphate + adenine. It participates in purine metabolism; AMP biosynthesis via salvage pathway; AMP from adenine: step 1/1. Functionally, catalyzes a salvage reaction resulting in the formation of AMP, that is energically less costly than de novo synthesis. This chain is Adenine phosphoribosyltransferase, found in Geobacillus kaustophilus (strain HTA426).